The primary structure comprises 174 residues: Urease accessory protein UreE (174 aa).

It belongs to the UreE family.

It is found in the cytoplasm. In terms of biological role, involved in urease metallocenter assembly. Binds nickel. Probably functions as a nickel donor during metallocenter assembly. This is Urease accessory protein UreE from Helicobacter hepaticus (strain ATCC 51449 / 3B1).